The sequence spans 895 residues: Putative endoplasmic reticulum metallopeptidase 1-B (895 aa).

The interval 1 to 27 (MSTGIRRRHADEKKNILEKESLQNDET) is disordered. The Cytoplasmic portion of the chain corresponds to 1–39 (MSTGIRRRHADEKKNILEKESLQNDETQREMEKDISLLR). Over residues 9–27 (HADEKKNILEKESLQNDET) the composition is skewed to basic and acidic residues. Residues 40 to 60 (PAHWNFIGLFFLVLIIGTTFL) form a helical membrane-spanning segment. The Lumenal segment spans residues 61–374 (HKCLPEPKDP…KPAEYADRKT (314 aa)). Residue N156 is glycosylated (N-linked (GlcNAc...) asparagine). 2 residues coordinate Zn(2+): H180 and D192. E226 serves as the catalytic Proton acceptor. Positions 227, 253, and 329 each coordinate Zn(2+). A helical membrane pass occupies residues 375–395 (VFFDFLGLFVIIYPLSIAHLV). Residues 396–424 (NMLTICTVIALMSHRFYSKTFITFLALRD) are Cytoplasmic-facing. The helical transmembrane segment at 425–445 (YVLTILTIALVLKAMTFMSLF) threads the bilayer. The Lumenal portion of the chain corresponds to 446-457 (TYGALRWYTRHW). Residues 458 to 478 (LALVAYGLPSVWAGISVQGLL) traverse the membrane as a helical segment. The Cytoplasmic portion of the chain corresponds to 479-489 (TARLAPKAREE). Residues 490-512 (YGSTLELIHLTLISGILLAFTYY) form a helical membrane-spanning segment. The Lumenal portion of the chain corresponds to 513 to 515 (DIA). Residues 516 to 538 (SGFLFALLLVPAIKSIITYFGAW) traverse the membrane as a helical segment. Topologically, residues 539 to 553 (PTCPTFNTILTLILS) are cytoplasmic. The chain crosses the membrane as a helical span at residues 554-574 (FPGCAMAIYTTEMLLSIFIPI). Over 575–584 (MGRSSYNPEP) the chain is Lumenal. The helical transmembrane segment at 585–605 (AVSFFVAFSAGCIVLSLGGLV) threads the bilayer. Residues 606-619 (AKSRNSRSSNEAGL) lie on the Cytoplasmic side of the membrane. A helical membrane pass occupies residues 620–640 (LELIYNILGVLLVTLTILYVF). Topologically, residues 641 to 895 (SSFWPSPYRF…WNVDQVYKYF (255 aa)) are lumenal. 2 N-linked (GlcNAc...) asparagine glycosylation sites follow: N679 and N796.

This sequence belongs to the peptidase M28 family. Zn(2+) is required as a cofactor.

The protein localises to the endoplasmic reticulum membrane. The chain is Putative endoplasmic reticulum metallopeptidase 1-B from Caenorhabditis elegans.